The sequence spans 244 residues: Transcriptional activator protein CarR (244 aa).

The HTH luxR-type domain occupies 162–227; the sequence is DNSRNALLSP…HAITKALELN (66 aa). A DNA-binding region (H-T-H motif) is located at residues 186-205; the sequence is YKEVSRILGISEVTVKFHIN.

It belongs to the autoinducer-regulated transcriptional regulatory protein family.

Its function is as follows. Functions as an OHLL responsive transcriptional regulator which acts in the control of the biosynthesis of carbapenem antibiotics. The sequence is that of Transcriptional activator protein CarR (carR) from Pectobacterium carotovorum subsp. carotovorum (Erwinia carotovora subsp. carotovora).